Consider the following 215-residue polypeptide: Small ribosomal subunit protein uS7 (215 aa).

The protein belongs to the universal ribosomal protein uS7 family. Part of the 30S ribosomal subunit.

Its function is as follows. One of the primary rRNA binding proteins, it binds directly to 16S rRNA where it nucleates assembly of the head domain of the 30S subunit. Is located at the subunit interface close to the decoding center. The protein is Small ribosomal subunit protein uS7 of Thermococcus onnurineus (strain NA1).